Consider the following 155-residue polypeptide: Transcriptional repressor NrdR (155 aa).

The segment at 3-34 (CPFCHAEETKVVDSRLVADGAQVRRRRECLEC) is a zinc-finger region. The region spanning 49–139 (PLIIKRDGRR…VYKRFKDVSD (91 aa)) is the ATP-cone domain.

This sequence belongs to the NrdR family. Zn(2+) serves as cofactor.

Its function is as follows. Negatively regulates transcription of bacterial ribonucleotide reductase nrd genes and operons by binding to NrdR-boxes. This is Transcriptional repressor NrdR from Legionella pneumophila (strain Lens).